Here is a 65-residue protein sequence, read N- to C-terminus: Large ribosomal subunit protein bL35 (65 aa).

The protein belongs to the bacterial ribosomal protein bL35 family.

This chain is Large ribosomal subunit protein bL35, found in Thiobacillus denitrificans (strain ATCC 25259 / T1).